Here is a 378-residue protein sequence, read N- to C-terminus: Glutamate 5-kinase (378 aa).

Lysine 14 serves as a coordination point for ATP. Residues serine 54, aspartate 141, and asparagine 153 each coordinate substrate. 173 to 174 serves as a coordination point for ATP; it reads SD. Residues 279–356 form the PUA domain; it reads AGRLTVDAGA…DEISAILGYD (78 aa).

Belongs to the glutamate 5-kinase family.

It localises to the cytoplasm. The enzyme catalyses L-glutamate + ATP = L-glutamyl 5-phosphate + ADP. It functions in the pathway amino-acid biosynthesis; L-proline biosynthesis; L-glutamate 5-semialdehyde from L-glutamate: step 1/2. Catalyzes the transfer of a phosphate group to glutamate to form L-glutamate 5-phosphate. The sequence is that of Glutamate 5-kinase from Brucella canis (strain ATCC 23365 / NCTC 10854 / RM-666).